The primary structure comprises 418 residues: D-amino acid dehydrogenase (418 aa).

Position 3 to 17 (3 to 17 (VLVLGAGVAGVSSAW)) interacts with FAD.

This sequence belongs to the DadA oxidoreductase family. The cofactor is FAD.

It catalyses the reaction a D-alpha-amino acid + A + H2O = a 2-oxocarboxylate + AH2 + NH4(+). Its pathway is amino-acid degradation; D-alanine degradation; NH(3) and pyruvate from D-alanine: step 1/1. In terms of biological role, oxidative deamination of D-amino acids. This Neisseria meningitidis serogroup C (strain 053442) protein is D-amino acid dehydrogenase.